The following is a 306-amino-acid chain: UDP-N-acetylenolpyruvoylglucosamine reductase (306 aa).

Residues 29–193 enclose the FAD-binding PCMH-type domain; it reads RVGGPADWLF…IRASLRGTPD (165 aa). R173 is an active-site residue. S222 acts as the Proton donor in catalysis. E292 is a catalytic residue.

This sequence belongs to the MurB family. Requires FAD as cofactor.

The protein localises to the cytoplasm. The catalysed reaction is UDP-N-acetyl-alpha-D-muramate + NADP(+) = UDP-N-acetyl-3-O-(1-carboxyvinyl)-alpha-D-glucosamine + NADPH + H(+). It participates in cell wall biogenesis; peptidoglycan biosynthesis. In terms of biological role, cell wall formation. This chain is UDP-N-acetylenolpyruvoylglucosamine reductase, found in Gluconobacter oxydans (strain 621H) (Gluconobacter suboxydans).